Consider the following 573-residue polypeptide: MDQWSDNKDAIGMLSESLKEKVVTNEIAPALKEVKNHKYNFETEILNTGNVWNNDSKNGESGSAFGLDKIFQSSDSGNIAEGLELDLGNIMLETHNLESPAWKHADYDGVAASVNDNNNDWKFFVFDEREIDSMLQLFVRDFRADKPALRLAPSKLFYLASRFAFFYMPKEKELGTVLLNAFLCEVNQVTQQHPNDMVLCVQWLANVSLLLFYLKKDNKLDDLTVDIQNRCSELMNSLYITICQDAMRRMNENLEEGMVKYTGIQGLEDILRSRSWNLLRRRPTNDASTSPRSTPSASPRSITKIIASTLHLLEVFYIHPLIRAQCIEQLFSWLGARLFNIVISNKKYLSRAAAMETRFNISSLEEWSQTNSPKLQKPFDYPDEDLKVDLISKLLSLVQLLQWLQCLYRLSEDEDPRALQETLESLDALNPRQIYTAAKLYRPDITETKVSKTFLKKLDAFHEEKLREKINSSDKGDVSYEFELLKDETVFSPLKLPTKAQLINAYSYIVSGNGFNEDRKIVFQPHVSNILIDKLEENGLSMERAELPTSVFEDELQRREWRPDQEVEELLST.

Positions 180-464 constitute a Dilute domain; sequence NAFLCEVNQV…LKKLDAFHEE (285 aa).

It is found in the cytoplasm. It localises to the golgi apparatus. The protein is Dilute domain-containing protein SPAC25B8.08 of Schizosaccharomyces pombe (strain 972 / ATCC 24843) (Fission yeast).